The chain runs to 171 residues: ATP synthase subunit b (171 aa).

Residues 24–44 (INLVIVIGVLYWFLKGFLGGI) form a helical membrane-spanning segment.

Belongs to the ATPase B chain family. F-type ATPases have 2 components, F(1) - the catalytic core - and F(0) - the membrane proton channel. F(1) has five subunits: alpha(3), beta(3), gamma(1), delta(1), epsilon(1). F(0) has four main subunits: a(1), b(1), b'(1) and c(10-14). The alpha and beta chains form an alternating ring which encloses part of the gamma chain. F(1) is attached to F(0) by a central stalk formed by the gamma and epsilon chains, while a peripheral stalk is formed by the delta, b and b' chains.

The protein localises to the cellular thylakoid membrane. In terms of biological role, f(1)F(0) ATP synthase produces ATP from ADP in the presence of a proton or sodium gradient. F-type ATPases consist of two structural domains, F(1) containing the extramembraneous catalytic core and F(0) containing the membrane proton channel, linked together by a central stalk and a peripheral stalk. During catalysis, ATP synthesis in the catalytic domain of F(1) is coupled via a rotary mechanism of the central stalk subunits to proton translocation. Its function is as follows. Component of the F(0) channel, it forms part of the peripheral stalk, linking F(1) to F(0). This Synechococcus sp. (strain WH7803) protein is ATP synthase subunit b.